A 220-amino-acid polypeptide reads, in one-letter code: Cell surface glycolipoprotein MPB83 (220 aa).

Positions 1–24 (MINVQAKPAAAASLAAIAIAFLAG) are cleaved as a signal peptide. C25 carries the N-palmitoyl cysteine lipid modification. C25 carries S-diacylglycerol cysteine lipidation. 2 O-linked (Man...) threonine glycosylation sites follow: T48 and T49. The FAS1 domain maps to 83-215 (QDPVATAASN…ATVYMIDTVL (133 aa)).

In terms of assembly, interacts with host (human) TLR2. Post-translationally, O-glycosylated. Contains 0-3 mannose residues attached to residues 48-49 in various configurations; the dominant glycoform is Thr-48(Man)/Thr-49(Man2) with an unusual Man(1-&gt;3)Man linkage, but Thr48(Man3)/Thr49(Man0) through to Thr48(Man0/)Thr49(Man3) are also seen. In terms of processing, when isolated from culture filtrate runs as 25 and 23 kDa proteins; the larger protein is much less abundant, mostly associated with the cell and starts at residue 28, the shorter is more abundant and starts at residue 48.

The protein localises to the cell membrane. It is found in the secreted. The protein resides in the cell wall. In terms of biological role, induces expression of human (host) matrix metalloproteinase-9 (MMP9) in a TLR1/TLR2-dependent fashion; the acylated 20 first mature residues (residues 25-40) induce the most expression, but whole recombinant protein (non-acylated and non-glycosylated), and mannosylated but not acylated protein (residues 26-220) also induce expression. The polypeptide is Cell surface glycolipoprotein MPB83 (mpb83) (Mycobacterium bovis (strain ATCC BAA-935 / AF2122/97)).